The following is a 457-amino-acid chain: Phosphoglucosamine mutase (457 aa).

Catalysis depends on Ser103, which acts as the Phosphoserine intermediate. Residues Ser103, Asp244, Asp246, and Asp248 each contribute to the Mg(2+) site. A Phosphoserine modification is found at Ser103.

Belongs to the phosphohexose mutase family. Requires Mg(2+) as cofactor. In terms of processing, activated by phosphorylation.

The catalysed reaction is alpha-D-glucosamine 1-phosphate = D-glucosamine 6-phosphate. Catalyzes the conversion of glucosamine-6-phosphate to glucosamine-1-phosphate. The protein is Phosphoglucosamine mutase of Granulibacter bethesdensis (strain ATCC BAA-1260 / CGDNIH1).